A 228-amino-acid chain; its full sequence is MADS-box transcription factor 22 (228 aa).

Residues 1-61 (MARERREIKR…GKLSHFASSS (61 aa)) enclose the MADS-box domain. Residues 86 to 176 (LNLEHSKYAH…RNQVSQISPA (91 aa)) form the K-box domain. Residues 189-217 (EGQSSESVMTALHSGSSQSQDNDDGSDVS) form a disordered region.

As to expression, expressed in palea and stamen primordia. Expressed in shoots and coleoptiles.

The protein localises to the nucleus. In terms of biological role, probable transcription factor. May be required for spikelet (rice flower) development. Transcription factor that functions to support the MADS55 in its function as negative regulator of brassinosteroid signaling. In Oryza sativa subsp. japonica (Rice), this protein is MADS-box transcription factor 22 (MADS22).